The following is a 333-amino-acid chain: Ketoreductase sphI (333 aa).

Tyrosine 167 lines the NADP(+) pocket.

The protein belongs to the NAD(P)-dependent epimerase/dehydratase family. Dihydroflavonol-4-reductase subfamily.

Its function is as follows. Ketoreductase; part of the gene cluster that mediates the biosynthesis of sphingofungins, bioactive molecules acting as sphingolipid inhibitors via inhibiting serine palmitoyl transferase (SPT). Does not seem to be involved in any biosynthetic process leading to the production of sphingofungins, but might be connected to a regulation or resistance mechanism. The chain is Ketoreductase sphI from Aspergillus fumigatus (strain CBS 144.89 / FGSC A1163 / CEA10) (Neosartorya fumigata).